Here is a 1147-residue protein sequence, read N- to C-terminus: MGKAAVEQRGVDDLVLMPKITEQDICANLEKRYFNDLIYTNIGPVLISVNPFRRIDALLTDECLHCYRGRYQHEQPPHVYALAEAAYRGVKSENINQCVIISGESGAGKTEASKLVMQYVAAVSGNSGGVDFVKHSNPLLEAFGNAKTLRNNNSSRFGKYFEIHFNRLGEPCGGRITNYLLEKSRVTFQTRGERSFHIFYQLLAGASDAEAQEMQLYAPENFNYLNQSACYTVDGIDDIKEFADTRNAINVMGMTAEEQRQVFHLVAGILHLGNVAFHDGGKGTAAVHDRTPFALKNALLFRVLNTGGAGAKKMSTYNVPQNVEQAASARDALAKTIYSRMFDWIVSKVNEALQKQGGSGDHNNNMIGVLDIFGFEIFEQNGFEQFCINYVNEKLQQYFIELTLKAEQEEYVNEGIQWTPIKYFNNKVVCELIEGKRPPGIFSLLDDICFTMHAQSDGMDGKFLQKCQGGFPSHLHFRGMNNAFSIKHYAGEVTYEAEGFCEKNKDTLFDDLIAVIQESENRLLVSWFPEDTKQLQKKRPTTAGFKLKTSCDALMEALSRCSPHYIRCIKPNDNKAYHDWDATRTKHQVQYLGLLENVRVRRAGFAYRAEFDRFLRRYKKLSPKTWGIWGEWSGAPKDGCQTLLNDLGLDTSQWQLGKSKVFIRYPETLFHLEECLDRKDYDCTLRIQKAWRHWKSRKHQLEQRKMAADLLKGKKERQRHSVNRKYEFDYINYDANYPLQDCVRSSGRDKEATAFTDQVLVLNRRGKPERRDLIVTNEAVYFAMRKKKSGQVVYNLKRRIPLGEIASLSLSTLQDNYVVIHHNQYDMVFENDKKTEIVTILMENYKMSGGRDLPVNFNDNITYKASNGAQRRLTFSKNESASAQPSIKKSRANIQIGIATGLPKETDSSPPNWTPSGGGGGYGGGRGGGGGGRGAAGGGRGGFGGGGGGGYSQPVAQAQPVAQVPQPVAAVPSAGRGGPGMGGPGAGRGGPGMGRGGPGMGGPGAGRGGPGMGGPGGPGRGGPGGPGAGRGGPGGPGAGRGGPGMGGPGGAGRGGPGAGRGGPGMGGPGAGRGGPGAGRGAAPAPAPAAPAKPQVKALYDYDAQTGDELTFKEGDTIIVHQKDPAGWWEGELNGKRGWVPANYVQDI.

The Myosin motor domain maps to 9–677 (RGVDDLVLMP…TLFHLEECLD (669 aa)). 103–110 (GESGAGKT) provides a ligand contact to ATP. Residue Ser315 is modified to Phosphoserine. An actin-binding region spans residues 551–573 (CDALMEALSRCSPHYIRCIKPND). The TH1 domain maps to 715 to 900 (KERQRHSVNR…RANIQIGIAT (186 aa)). 2 disordered regions span residues 901-954 (GLPK…YSQP) and 969-1089 (AAVP…APAA). Composition is skewed to gly residues over residues 916-951 (SGGGGGYGGGRGGGGGGRGAAGGGRGGFGGGGGGGY) and 975-1079 (GRGG…GAGR). Residues 1090-1147 (PAKPQVKALYDYDAQTGDELTFKEGDTIIVHQKDPAGWWEGELNGKRGWVPANYVQDI) form the SH3 domain.

Belongs to the TRAFAC class myosin-kinesin ATPase superfamily. Myosin family. As to quaternary structure, myosin I heavy chain is single-headed. Dimer of a heavy and a light chain. Inability to self-assemble into filaments.

Functionally, myosin is a protein that binds to F-actin and has ATPase activity that is activated by F-actin. In Acanthamoeba castellanii (Amoeba), this protein is Myosin heavy chain IB (MIB).